The following is a 524-amino-acid chain: Probable cytochrome P450 519C1 (524 aa).

A helical transmembrane segment spans residues 1–21 (MNILLLIFYFLVCFLIFDFIK). Residue Cys470 coordinates heme.

The protein belongs to the cytochrome P450 family. Requires heme as cofactor.

The protein localises to the membrane. The chain is Probable cytochrome P450 519C1 (cyp519C1) from Dictyostelium discoideum (Social amoeba).